Here is a 607-residue protein sequence, read N- to C-terminus: Chaperone protein dnaK (607 aa).

Over residues 579–591 (KASETSNAKTNGK) the composition is skewed to polar residues. A disordered region spans residues 579–607 (KASETSNAKTNGKASEKEDVIDADFKAQE). Over residues 592–607 (ASEKEDVIDADFKAQE) the composition is skewed to basic and acidic residues.

Belongs to the heat shock protein 70 family.

It is found in the plastid. The protein localises to the chloroplast. In terms of biological role, acts as a chaperone. The polypeptide is Chaperone protein dnaK (Cyanidioschyzon merolae (strain NIES-3377 / 10D) (Unicellular red alga)).